The sequence spans 238 residues: Ribosomal RNA small subunit methyltransferase G (238 aa).

S-adenosyl-L-methionine is bound by residues glycine 78, phenylalanine 83, 129-130 (AE), and arginine 148. A disordered region spans residues 217-238 (KKKETPKKYPRKAGTPAKSPIK).

This sequence belongs to the methyltransferase superfamily. RNA methyltransferase RsmG family.

The protein localises to the cytoplasm. Functionally, specifically methylates the N7 position of a guanine in 16S rRNA. This is Ribosomal RNA small subunit methyltransferase G from Lactococcus lactis subsp. cremoris (strain MG1363).